Here is a 352-residue protein sequence, read N- to C-terminus: RNA 3'-terminal phosphate cyclase (352 aa).

ATP-binding positions include glutamine 102 and histidine 292–glutamine 296. The Tele-AMP-histidine intermediate role is filled by histidine 318.

This sequence belongs to the RNA 3'-terminal cyclase family. Type 1 subfamily.

Its subcellular location is the cytoplasm. It carries out the reaction a 3'-end 3'-phospho-ribonucleotide-RNA + ATP = a 3'-end 2',3'-cyclophospho-ribonucleotide-RNA + AMP + diphosphate. Catalyzes the conversion of 3'-phosphate to a 2',3'-cyclic phosphodiester at the end of RNA. The mechanism of action of the enzyme occurs in 3 steps: (A) adenylation of the enzyme by ATP; (B) transfer of adenylate to an RNA-N3'P to produce RNA-N3'PP5'A; (C) and attack of the adjacent 2'-hydroxyl on the 3'-phosphorus in the diester linkage to produce the cyclic end product. The biological role of this enzyme is unknown but it is likely to function in some aspects of cellular RNA processing. This Methanopyrus kandleri (strain AV19 / DSM 6324 / JCM 9639 / NBRC 100938) protein is RNA 3'-terminal phosphate cyclase.